We begin with the raw amino-acid sequence, 103 residues long: Co-chaperonin GroES (103 aa).

This sequence belongs to the GroES chaperonin family. Heptamer of 7 subunits arranged in a ring. Interacts with the chaperonin GroEL.

The protein localises to the cytoplasm. Functionally, together with the chaperonin GroEL, plays an essential role in assisting protein folding. The GroEL-GroES system forms a nano-cage that allows encapsulation of the non-native substrate proteins and provides a physical environment optimized to promote and accelerate protein folding. GroES binds to the apical surface of the GroEL ring, thereby capping the opening of the GroEL channel. This is Co-chaperonin GroES from Prochlorococcus marinus (strain MIT 9215).